We begin with the raw amino-acid sequence, 289 residues long: Homoserine kinase (289 aa).

79–89 is a binding site for ATP; that stretch reads PLARGLGSSSS.

It belongs to the GHMP kinase family. Homoserine kinase subfamily.

It localises to the cytoplasm. It catalyses the reaction L-homoserine + ATP = O-phospho-L-homoserine + ADP + H(+). It functions in the pathway amino-acid biosynthesis; L-threonine biosynthesis; L-threonine from L-aspartate: step 4/5. Functionally, catalyzes the ATP-dependent phosphorylation of L-homoserine to L-homoserine phosphate. This Streptococcus pneumoniae serotype 2 (strain D39 / NCTC 7466) protein is Homoserine kinase.